The primary structure comprises 220 residues: Deoxyribose-phosphate aldolase (220 aa).

Aspartate 89 functions as the Proton donor/acceptor in the catalytic mechanism. Catalysis depends on lysine 151, which acts as the Schiff-base intermediate with acetaldehyde. Lysine 180 (proton donor/acceptor) is an active-site residue.

Belongs to the DeoC/FbaB aldolase family. DeoC type 1 subfamily.

It is found in the cytoplasm. The catalysed reaction is 2-deoxy-D-ribose 5-phosphate = D-glyceraldehyde 3-phosphate + acetaldehyde. It participates in carbohydrate degradation; 2-deoxy-D-ribose 1-phosphate degradation; D-glyceraldehyde 3-phosphate and acetaldehyde from 2-deoxy-alpha-D-ribose 1-phosphate: step 2/2. Functionally, catalyzes a reversible aldol reaction between acetaldehyde and D-glyceraldehyde 3-phosphate to generate 2-deoxy-D-ribose 5-phosphate. The sequence is that of Deoxyribose-phosphate aldolase from Streptococcus pneumoniae (strain CGSP14).